Here is a 395-residue protein sequence, read N- to C-terminus: Succinyl-diaminopimelate desuccinylase (395 aa).

His74 contacts Zn(2+). Asp76 is an active-site residue. Residue Asp107 participates in Zn(2+) binding. Glu141 acts as the Proton acceptor in catalysis. Residues Glu142, Glu170, and His368 each coordinate Zn(2+).

It belongs to the peptidase M20A family. DapE subfamily. Homodimer. The cofactor is Zn(2+). Co(2+) serves as cofactor.

It catalyses the reaction N-succinyl-(2S,6S)-2,6-diaminopimelate + H2O = (2S,6S)-2,6-diaminopimelate + succinate. It participates in amino-acid biosynthesis; L-lysine biosynthesis via DAP pathway; LL-2,6-diaminopimelate from (S)-tetrahydrodipicolinate (succinylase route): step 3/3. Catalyzes the hydrolysis of N-succinyl-L,L-diaminopimelic acid (SDAP), forming succinate and LL-2,6-diaminopimelate (DAP), an intermediate involved in the bacterial biosynthesis of lysine and meso-diaminopimelic acid, an essential component of bacterial cell walls. This chain is Succinyl-diaminopimelate desuccinylase, found in Brucella abortus (strain S19).